We begin with the raw amino-acid sequence, 89 residues long: uncharacterized protein (89 aa).

The disordered stretch occupies residues 66–89; it reads RIKEQSSSSSATRTTQEPSLHLPD.

This is an uncharacterized protein from Cestrum parqui (CmYLCV).